The sequence spans 757 residues: Large ribosomal subunit protein mL102 (rPPR5) (757 aa).

Residues 39-55 are compositionally biased toward polar residues; that stretch reads EETQTPANANPETQSPD. Positions 39-82 are disordered; that stretch reads EETQTPANANPETQSPDAKSETKKNLTSTETRPLRERFQRGKRQ. Residues 70–82 show a composition bias toward basic and acidic residues; that stretch reads RPLRERFQRGKRQ. PPR repeat units lie at residues 149 to 183, 184 to 218, 219 to 253, 254 to 288, 289 to 323, 324 to 358, 359 to 393, 395 to 429, 430 to 464, 473 to 507, 510 to 541, 542 to 576, 577 to 611, 614 to 648, 651 to 680, and 681 to 715; these read DRDT…GVPW, DEDM…GVER, TIKS…GVEP, TRHT…GISP, DDAT…KIGP, SVVS…GIEP, NATT…HIAP, DNSI…NVPA, EAGH…EIIL, EPSA…GVQD, ALNN…GVPR, ESNA…GHVP, DSSL…NVGI, NMDL…GHTA, DSLL…DLSL, and EFSS…GSST.

The protein belongs to the PPR family. P subfamily. As to quaternary structure, component of the mitochondrial ribosome large subunit.

It is found in the mitochondrion. The sequence is that of Large ribosomal subunit protein mL102 (rPPR5) from Arabidopsis thaliana (Mouse-ear cress).